Reading from the N-terminus, the 193-residue chain is dCTP deaminase (193 aa).

DCTP contacts are provided by residues 110-115, aspartate 128, 136-138, tyrosine 171, lysine 178, and glutamine 182; these read RSSLAR and VLE. Glutamate 138 serves as the catalytic Proton donor/acceptor. The interval 171–193 is disordered; it reads YNKRKNAKYKDQQDAVASRISQD.

This sequence belongs to the dCTP deaminase family. In terms of assembly, homotrimer.

It catalyses the reaction dCTP + H2O + H(+) = dUTP + NH4(+). Its pathway is pyrimidine metabolism; dUMP biosynthesis; dUMP from dCTP (dUTP route): step 1/2. In terms of biological role, catalyzes the deamination of dCTP to dUTP. The sequence is that of dCTP deaminase from Shewanella oneidensis (strain ATCC 700550 / JCM 31522 / CIP 106686 / LMG 19005 / NCIMB 14063 / MR-1).